We begin with the raw amino-acid sequence, 114 residues long: Cholecystokinin (114 aa).

The signal sequence occupies residues 1 to 20 (MNGGLCLCVLMAVLAAGTLA). Tyr96 bears the Sulfotyrosine mark. A Phenylalanine amide modification is found at Phe102. Residues 106–114 (SAEEYEYTS) constitute a propeptide that is removed on maturation. 2 positions are modified to sulfotyrosine: Tyr110 and Tyr112.

This sequence belongs to the gastrin/cholecystokinin family. In terms of assembly, binds to CCK-A receptors in the pancreas and CCK-B receptors in the brain. In terms of processing, the precursor is cleaved by proteases to produce a number of active cholecystokinins. Brain contains CCK-octapeptide (CCK8) and several CCK-desoctapeptides; whereas pig gut contains intact CCK33, CCK39, and CCK58 as well as CCK-octapeptide and the CCK-desoctapeptides. Distribution differences are due to tissue-specific post-translational processing events. The precursor is cleaved by ACE, which removes the Gly-Arg-Arg peptide at the C-terminus, leading to mature hormone. Synthesized in both cerebral cortex and duodenal mucosa.

Its subcellular location is the secreted. Functionally, this peptide hormone induces gall bladder contraction and the release of pancreatic enzymes in the gut. Its function in the brain is not clear. Binding to CCK-A receptors stimulates amylase release from the pancreas, binding to CCK-B receptors stimulates gastric acid secretion. This is Cholecystokinin (CCK) from Sus scrofa (Pig).